The sequence spans 264 residues: uncharacterized protein (264 aa).

The next 6 helical transmembrane spans lie at 1–21 (MLLGLGIVVLIYSLIALSVSL), 43–63 (FFGVLNLLIALGVAGIINGFV), 95–115 (VVGLIHAGILMVLTTVALSSL), 146–166 (IATWTSVGIFWFLGLVLLGGL), 181–201 (GWLAVVVIGLTTLVVMVQPFV), and 215–235 (IVANTILIAILVIIVLVMFFP).

This sequence to M.pneumoniae MPN_308 C-terminal region.

It localises to the cell membrane. This is an uncharacterized protein from Mycoplasma pneumoniae (strain ATCC 29342 / M129 / Subtype 1) (Mycoplasmoides pneumoniae).